A 901-amino-acid chain; its full sequence is Protein translocase subunit SecA (901 aa).

ATP-binding positions include glutamine 87, 105-109, and aspartate 512; that span reads GEGKT. The disordered stretch occupies residues 859-901; that stretch reads HQDDDSAAAAALAAQTGERKVGRNDPCPCGSGKKYKQCHGRLQ. Residues cysteine 885, cysteine 887, cysteine 896, and histidine 897 each contribute to the Zn(2+) site. Over residues 891–901 the composition is skewed to basic residues; sequence KKYKQCHGRLQ.

The protein belongs to the SecA family. In terms of assembly, monomer and homodimer. Part of the essential Sec protein translocation apparatus which comprises SecA, SecYEG and auxiliary proteins SecDF-YajC and YidC. Zn(2+) serves as cofactor.

It localises to the cell inner membrane. It is found in the cytoplasm. It catalyses the reaction ATP + H2O + cellular proteinSide 1 = ADP + phosphate + cellular proteinSide 2.. Functionally, part of the Sec protein translocase complex. Interacts with the SecYEG preprotein conducting channel. Has a central role in coupling the hydrolysis of ATP to the transfer of proteins into and across the cell membrane, serving both as a receptor for the preprotein-SecB complex and as an ATP-driven molecular motor driving the stepwise translocation of polypeptide chains across the membrane. This is Protein translocase subunit SecA from Escherichia coli O9:H4 (strain HS).